The chain runs to 437 residues: Glutamyl-tRNA reductase (437 aa).

Residues 46–49 (TCNR), Ser-97, 102–104 (EEQ), and Gln-108 contribute to the substrate site. Residue Cys-47 is the Nucleophile of the active site. Position 177–182 (177–182 (GAGEMG)) interacts with NADP(+). Residues 410–437 (NGRVSEGKDAKVEEGKPEVDVQRSKAES) are disordered. Positions 414-437 (SEGKDAKVEEGKPEVDVQRSKAES) are enriched in basic and acidic residues.

It belongs to the glutamyl-tRNA reductase family. As to quaternary structure, homodimer.

It carries out the reaction (S)-4-amino-5-oxopentanoate + tRNA(Glu) + NADP(+) = L-glutamyl-tRNA(Glu) + NADPH + H(+). It participates in porphyrin-containing compound metabolism; protoporphyrin-IX biosynthesis; 5-aminolevulinate from L-glutamyl-tRNA(Glu): step 1/2. Its function is as follows. Catalyzes the NADPH-dependent reduction of glutamyl-tRNA(Glu) to glutamate 1-semialdehyde (GSA). The polypeptide is Glutamyl-tRNA reductase (Archaeoglobus fulgidus (strain ATCC 49558 / DSM 4304 / JCM 9628 / NBRC 100126 / VC-16)).